Consider the following 327-residue polypeptide: Metaxin-1 homolog (327 aa).

Residues 281–301 (IVAGVGAVLAMGAFAAWRGIY) form a helical membrane-spanning segment.

Belongs to the metaxin family. As to quaternary structure, associates with the mitochondrial contact site and cristae organizing system (MICOS) complex (also known as MINOS or MitOS complex).

It is found in the mitochondrion outer membrane. In terms of biological role, involved in transport of proteins into the mitochondrion. Essential for embryonic development. The protein is Metaxin-1 homolog of Drosophila melanogaster (Fruit fly).